Reading from the N-terminus, the 562-residue chain is Protein FAM83D-B (562 aa).

A disordered region spans residues 424–472 (ITTQTTETSQCTTQTPAPTSSVARLSNSSNSSSSSFSSASTTSTGSNCS). Residues 425–472 (TTQTTETSQCTTQTPAPTSSVARLSNSSNSSSSSFSSASTTSTGSNCS) are compositionally biased toward low complexity.

The protein belongs to the FAM83 family.

The protein resides in the cytoplasm. It is found in the cytoskeleton. Its subcellular location is the spindle. It localises to the spindle pole. Functionally, may regulate cell proliferation, growth, migration and epithelial to mesenchymal transition. May also be important for proper chromosome congression and alignment during mitosis. This chain is Protein FAM83D-B, found in Xenopus laevis (African clawed frog).